A 102-amino-acid polypeptide reads, in one-letter code: uncharacterized protein (102 aa).

The segment at 1 to 21 (MAESVNENNNNAGDSNGSGRT) is disordered. N-linked (GlcNAc...) asparagine glycosylation occurs at asparagine 16. A helical membrane pass occupies residues 24–44 (NTIVTIVVVVIVVTLIIILAT). Positions 49-102 (IGGSGKKVGAEEPATKLSSKSDDRNGGPNKKSPAKGSSKDDNNTEESVQSNLYG) are disordered. Over residues 56–73 (VGAEEPATKLSSKSDDRN) the composition is skewed to basic and acidic residues. Residue asparagine 90 is glycosylated (N-linked (GlcNAc...) asparagine). Polar residues predominate over residues 93 to 102 (EESVQSNLYG).

It localises to the membrane. This is an uncharacterized protein from Encephalitozoon cuniculi (strain GB-M1) (Microsporidian parasite).